A 303-amino-acid chain; its full sequence is Glutathione transport system permease protein GsiD (303 aa).

The next 6 membrane-spanning stretches (helical) occupy residues 40-60, 105-125, 144-164, 165-185, 222-242, and 266-286; these read AMTAALFVILLIVVAIFARWI, LAAGVFAVFIGAAIGTLLGLL, LFAFPGILLAIAVVAVLGSGI, ANVIIAVAIFSIPAFARLVRG, IVVFFTMRIGTSIISAASLSF, and VIAPHVAVFPALAIFLTVLAF. The region spanning 101–290 is the ABC transmembrane type-1 domain; sequence AQISLAAGVF…LTVLAFNLLG (190 aa).

It belongs to the binding-protein-dependent transport system permease family. In terms of assembly, the complex is composed of two ATP-binding proteins (GsiA), two transmembrane proteins (GsiC and GsiD) and a solute-binding protein (GsiB).

The protein resides in the cell inner membrane. Part of the ABC transporter complex GsiABCD involved in glutathione import. Probably responsible for the translocation of the substrate across the membrane. The sequence is that of Glutathione transport system permease protein GsiD from Escherichia coli O1:K1 / APEC.